The primary structure comprises 735 residues: Translation initiation factor IF-2 (735 aa).

2 stretches are compositionally biased toward basic and acidic residues: residues 52 to 66 (VNSEKKAEKKTEKPK) and 101 to 117 (KGKETKKTEAQQQEKKL). Residues 52 to 154 (VNSEKKAEKK…PAKKEKELPK (103 aa)) are disordered. The segment covering 121–133 (AKKKGKGPMKGKK) has biased composition (basic residues). Residues 134 to 145 (QAAPASKQAQQP) are compositionally biased toward low complexity. The tr-type G domain occupies 236–405 (ERPPVVTIMG…LLVSEMEELK (170 aa)). The G1 stretch occupies residues 245-252 (GHVDHGKT). Residue 245 to 252 (GHVDHGKT) coordinates GTP. The segment at 270–274 (GITQH) is G2. The segment at 291-294 (DTPG) is G3. GTP is bound by residues 291-295 (DTPGH) and 345-348 (NKMD). The interval 345-348 (NKMD) is G4. The G5 stretch occupies residues 381–383 (SAK).

Belongs to the TRAFAC class translation factor GTPase superfamily. Classic translation factor GTPase family. IF-2 subfamily.

The protein localises to the cytoplasm. One of the essential components for the initiation of protein synthesis. Protects formylmethionyl-tRNA from spontaneous hydrolysis and promotes its binding to the 30S ribosomal subunits. Also involved in the hydrolysis of GTP during the formation of the 70S ribosomal complex. The protein is Translation initiation factor IF-2 of Geobacillus thermodenitrificans (strain NG80-2).